Here is a 136-residue protein sequence, read N- to C-terminus: Large ribosomal subunit protein uL13 (136 aa).

It belongs to the universal ribosomal protein uL13 family. In terms of assembly, part of the 50S ribosomal subunit.

Its function is as follows. This protein is one of the early assembly proteins of the 50S ribosomal subunit, although it is not seen to bind rRNA by itself. It is important during the early stages of 50S assembly. This chain is Large ribosomal subunit protein uL13, found in Thermoplasma acidophilum (strain ATCC 25905 / DSM 1728 / JCM 9062 / NBRC 15155 / AMRC-C165).